The sequence spans 227 residues: Lectin (227 aa).

A signal peptide spans 1-28; it reads MTMTSTTTKAMAMAAAVLAAAAVAATNA. Pyrrolidone carboxylic acid is present on Q29. Chitin-binding type-1 domains follow at residues 29–70, 71–113, 114–156, and 157–199; these read QTCG…ACCS, SQRC…PCRA, DIKC…ACCP, and EKRC…GCYK. Cystine bridges form between C31/C46, C40/C52, C45/C59, C63/C68, C74/C89, C83/C95, C88/C102, C106/C111, C117/C132, C126/C138, C131/C145, C149/C154, C160/C175, C169/C181, C174/C188, and C192/C197. 38–40 contributes to the substrate binding site; that stretch reads MIC. A substrate-binding site is contributed by 90-101; the sequence is SQYGYCGFGSEY. Substrate is bound at residue 142-143; sequence SE. A propeptide spanning residues 202–227 is cleaved from the precursor; it reads DGMAAILANNQSVSFEGIIESVAELV. N211 carries N-linked (GlcNAc...) asparagine glycosylation.

In terms of tissue distribution, confined to root caps, several cell layers at the periphery of the coleorhiza and radicle, and in all cell layers of the coleoptile.

Its function is as follows. N-acetyl-D-glucosamine binding lectin. In Oryza sativa subsp. japonica (Rice), this protein is Lectin.